The chain runs to 1175 residues: Structural maintenance of chromosomes protein 2-1 (1175 aa).

Residues 2–1161 (HIKEICLEGF…NVLFRTKFVD (1160 aa)) form the Zinc-hook domain. ATP is bound at residue 32 to 39 (GLNGSGKS). Residues 172-508 (RMYENKKEAA…AQLANFQFTY (337 aa)) adopt a coiled-coil conformation. The 121-residue stretch at 518-638 (SKVKGVVAKL…KTTDVAKEVA (121 aa)) folds into the SMC hinge domain. Positions 673-1028 (LRKLHDLAEA…ELDEKKKETL (356 aa)) form a coiled coil.

The protein belongs to the SMC family. SMC2 subfamily. Forms a heterodimer with SMC4. Component of the condensin complex, which contains the SMC2 and SMC4 heterodimer, and three non SMC subunits that probably regulate the complex: CAPH, CAPD2 and CAPG. In terms of tissue distribution, highly expressed in roots and young floral buds.

It localises to the nucleus. Its function is as follows. Central component of the condensin complex, a complex required for conversion of interphase chromatin into mitotic-like condense chromosomes. The condensin complex probably introduces positive supercoils into relaxed DNA in the presence of type I topoisomerases and converts nicked DNA into positive knotted forms in the presence of type II topoisomerases. Also involved in chromosome segregation in meiosis. In Arabidopsis thaliana (Mouse-ear cress), this protein is Structural maintenance of chromosomes protein 2-1 (SMC2-1).